The sequence spans 542 residues: Membrane protein insertase YidC (542 aa).

The next 5 membrane-spanning stretches (helical) occupy residues 7-27 (LLVM…QQDF), 338-358 (FALL…IIGV), 417-437 (MGGC…YWTF), 455-475 (LSAQ…MFLL), and 494-514 (FMPV…VLYW).

It belongs to the OXA1/ALB3/YidC family. Type 1 subfamily. As to quaternary structure, interacts with the Sec translocase complex via SecD. Specifically interacts with transmembrane segments of nascent integral membrane proteins during membrane integration.

The protein resides in the cell inner membrane. Its function is as follows. Required for the insertion and/or proper folding and/or complex formation of integral membrane proteins into the membrane. Involved in integration of membrane proteins that insert both dependently and independently of the Sec translocase complex, as well as at least some lipoproteins. Aids folding of multispanning membrane proteins. This is Membrane protein insertase YidC from Actinobacillus pleuropneumoniae serotype 7 (strain AP76).